The chain runs to 394 residues: MAPKKQNGFMMFVNEWRNRNAEGRRMTLAEAVYHCGTIWEKMDTQQRGPYNSDAKDANAARRDKRGSLNGHGQVDKAQREAAESLMDKAQREAAESLMDMKRTTERLVLNAKMSHDLENAKFVFVAFNYFTKALTTDVYVPAEFAACEYSLKEGIRSIYSTMIDPGQIIFGQGSDALHNSSTTHDLPLPPNALGEKNMVKLYRNILDYLTKCQGEGKTPIVFTPAENIGMVKSCFRYLECEDDSRDGGGKIEVFDIQYLLFILKKEVMSVAGLNDEKINKFATDAFFKNDFFEFTAGIACQISSINTRDYHVATLIGLLPAQTINVYLGSTLRSMHEVLSDNDTKLTGYISFLFEVICGVALMFWVLQKARKELSETLLSADYNNEGKHPDVQV.

The segment at residues 2 to 69 is a DNA-binding region (HMG box); that stretch reads APKKQNGFMM…ARRDKRGSLN (68 aa). The segment at 44-93 is disordered; sequence TQQRGPYNSDAKDANAARRDKRGSLNGHGQVDKAQREAAESLMDKAQREA. Residues 73–93 show a composition bias toward basic and acidic residues; it reads QVDKAQREAAESLMDKAQREA.

The protein belongs to the maelstrom family.

It is found in the cytoplasm. Its subcellular location is the nucleus. Functionally, involved both in the piRNA and miRNA metabolic processes. As a component of the meiotic nuage, plays a central role during oogenesis by repressing transposable elements and preventing their mobilization, which is essential for the germline integrity. Repression of transposable elements is mediated via the piRNA metabolic process, which mediates the repression of transposable elements during meiosis by forming complexes composed of piRNAs and Piwi proteins and governs the repression of transposons. As a nuclear component, it is required for proper differentiation in the germline stem cell (GSC) lineage by repressing microRNA-7 (miR-7), thereby acting as an indirect regulator of bag-of-marbles (Bam). Acts by binding to the promoter of miR-7 gene and repressing its expression; miR-7 repression alleviates the Bam repression by miR-7, thereby allowing differentiation in the germline stem cell (GSC) lineage. The polypeptide is Protein maelstrom (mael) (Drosophila simulans (Fruit fly)).